A 382-amino-acid polypeptide reads, in one-letter code: Homoserine O-succinyltransferase (382 aa).

Positions N51 to L359 constitute an AB hydrolase-1 domain. S157 serves as the catalytic Nucleophile. Residue R227 participates in substrate binding. Active-site residues include D322 and H355. D356 is a substrate binding site.

The protein belongs to the AB hydrolase superfamily. MetX family. As to quaternary structure, homodimer.

The protein resides in the cytoplasm. The catalysed reaction is L-homoserine + succinyl-CoA = O-succinyl-L-homoserine + CoA. It functions in the pathway amino-acid biosynthesis; L-methionine biosynthesis via de novo pathway; O-succinyl-L-homoserine from L-homoserine: step 1/1. Transfers a succinyl group from succinyl-CoA to L-homoserine, forming succinyl-L-homoserine. This is Homoserine O-succinyltransferase from Marinobacter nauticus (strain ATCC 700491 / DSM 11845 / VT8) (Marinobacter aquaeolei).